The primary structure comprises 96 residues: Co-chaperonin GroES (96 aa).

The protein belongs to the GroES chaperonin family. As to quaternary structure, heptamer of 7 subunits arranged in a ring. Interacts with the chaperonin GroEL.

The protein resides in the cytoplasm. Its function is as follows. Together with the chaperonin GroEL, plays an essential role in assisting protein folding. The GroEL-GroES system forms a nano-cage that allows encapsulation of the non-native substrate proteins and provides a physical environment optimized to promote and accelerate protein folding. GroES binds to the apical surface of the GroEL ring, thereby capping the opening of the GroEL channel. This is Co-chaperonin GroES from Buchnera aphidicola subsp. Acyrthosiphon pisum (strain 5A).